Reading from the N-terminus, the 417-residue chain is Gamma-glutamyl phosphate reductase (417 aa).

The protein belongs to the gamma-glutamyl phosphate reductase family.

It is found in the cytoplasm. The catalysed reaction is L-glutamate 5-semialdehyde + phosphate + NADP(+) = L-glutamyl 5-phosphate + NADPH + H(+). It participates in amino-acid biosynthesis; L-proline biosynthesis; L-glutamate 5-semialdehyde from L-glutamate: step 2/2. Its function is as follows. Catalyzes the NADPH-dependent reduction of L-glutamate 5-phosphate into L-glutamate 5-semialdehyde and phosphate. The product spontaneously undergoes cyclization to form 1-pyrroline-5-carboxylate. This Escherichia coli O45:K1 (strain S88 / ExPEC) protein is Gamma-glutamyl phosphate reductase.